The chain runs to 410 residues: MATTNSQSHYSYADNMNMYNMYHPHSLPPTYYDNSGSNAYYQNTSNYQGYYPQESYSESCYYYNNQEQVTTQTVPPVQPTTPPPKATKRKAEDDAASIIAAVEERPSTLRALLTNPVKKLKYTPDYFYTTVEQVKKAPAVSTKVTASPAPSYDQEYVTVPTPSASEDVDYLDVYSPQSQTQKLKNGDFATPPPTTPTSLPPLEGISTPPQSPGEKSSSAVSQEINHRIVTAPNGAGDFNWSHIEETLASDCKDSKRTRQTYTRYQTLELEKEFHFNRYITRRRRIDIANALSLSERQIKIWFQNRRMKSKKDRTLDSSPEHCGAGYTAMLPPLEATSTATTGAPSVPVPMYHHHQTTAAYPAYSHSHSHGYGLLNDYPQQQTHQQYDAYPQQYQHQCSYQQHPQDLYHLS.

3 disordered regions span residues 71-93 (TQTV…KAED), 138-157 (PAVS…QEYV), and 175-221 (SPQS…SAVS). Positions 76-85 (PVQPTTPPPK) are enriched in pro residues. Over residues 190–199 (TPPPTTPTSL) the composition is skewed to pro residues. The homeobox DNA-binding region spans 254–313 (SKRTRQTYTRYQTLELEKEFHFNRYITRRRRIDIANALSLSERQIKIWFQNRRMKSKKDR).

It belongs to the Antp homeobox family. In terms of processing, phosphorylated at as many as 16 sites. In terms of tissue distribution, expressed early in development in a striped pattern at the blastoderm stage. Later expressed in a specific subset of neuronal precursor cells, neurons and glia in the developing CNS. Between 5 and 6 hours of development, found in the midline precursor-2 cells in a segmentally repeating pattern. Expression in many other neuronal precursors follows and reaches a second peak of abundance at 9 hours of development. Expressed in the hindgut between 11-15 hours of development.

It is found in the nucleus. In terms of biological role, may play a role in determining neuronal identity, may be directly involved in specifying identity of individual neurons. Required during embryogenesis for the process of body segmentation. Homeotic protein, required in alternating segment primordia, it specifies the correct number of segments. This Drosophila melanogaster (Fruit fly) protein is Segmentation protein fushi tarazu (ftz).